A 581-amino-acid polypeptide reads, in one-letter code: MANAPHGGVLKDLLVRDAALHDSLLQEARSLNDIFLTERQLCDLELILNGGFSPLEGFMNERDYTSVVETLRLAPYNGQKHGDVFPIPITLDVSQEDINTLGLKQGGRVALRDPRDDAALAILTVSDIYRPNKAIEAEKVMGADDIAHPSVAYLRNNVKEFYVGGKVQAIQAPTHFDYVPLRFTPAELRAHFHKLAWRKVVAFQTRNPMHRAHRELTVRAARQRRANVLIHPVVGLTKPGDVDHYTRVRAYQALMPSYPEGMAHLALLPLAMRMAGPREAVWHAVIRKNFGATHFIVGRDHAGPGKNSQGQDFYGPYDAQELVTQFKDELQIEMVPFQAMTYLPGSDEYQPVDEVPKGTPTADISGTELRKRLRTGASIPDWFSYTGVVKVLRESYPPRPQQGFTILLTGLHNSGKDTIARALQVTLQQQGSRSVSLLLGEELRSDLDPQIGRAITPEQKHINLERIGFVAGELTKAGAAVIAAPTAPYERSRQAFKKQVVGSGGGNYFLVHVATPLEWCEKVDRRGLYKAARAGEIKNLTGVDDVYEAPEDADLVCDLRNDTVPEIVHSIIMILESQNLV.

Residues 1 to 176 (MANAPHGGVL…VQAIQAPTHF (176 aa)) are N-terminal. The interval 177 to 401 (DYVPLRFTPA…LRESYPPRPQ (225 aa)) is catalytic. Residue Q204 coordinates sulfate. ATP contacts are provided by residues 204–207 (QTRN) and 298–301 (GRDH). Catalysis depends on residues T205, R206, and N207. R206 contributes to the sulfate binding site. A302 is a sulfate binding site. Residue M340 coordinates ATP. The allosteric regulation domain; adenylyl-sulfate kinase-like stretch occupies residues 402–581 (QGFTILLTGL…IMILESQNLV (180 aa)). Residues 441–444 (EELR), 486–487 (TA), and R526 contribute to the 3'-phosphoadenylyl sulfate site.

It in the N-terminal section; belongs to the sulfate adenylyltransferase family. This sequence in the C-terminal section; belongs to the APS kinase family. Homohexamer. Dimer of trimers.

Its subcellular location is the cytoplasm. The enzyme catalyses sulfate + ATP + H(+) = adenosine 5'-phosphosulfate + diphosphate. It participates in sulfur metabolism; hydrogen sulfide biosynthesis; sulfite from sulfate: step 1/3. Its activity is regulated as follows. Allosterically inhibited by 3'-phosphoadenosine 5'-phosphosulfate (PAPS). In terms of biological role, catalyzes the first intracellular reaction of sulfate assimilation, forming adenosine-5'-phosphosulfate (APS) from inorganic sulfate and ATP. Plays an important role in sulfate activation as a component of the biosynthesis pathway of sulfur-containing amino acids. This is Sulfate adenylyltransferase from Cryptococcus neoformans var. neoformans serotype D (strain B-3501A) (Filobasidiella neoformans).